The chain runs to 152 residues: Nucleoplasmin-like protein (152 aa).

Over residues 109–128 (EVVDMEEDDEEDDVAEDEED) the composition is skewed to acidic residues. Positions 109-152 (EVVDMEEDDEEDDVAEDEEDEHPKKRAKIENAADGKNAKNNKKK) are disordered. Residues 136-145 (KIENAADGKN) are compositionally biased toward basic and acidic residues.

Belongs to the nucleoplasmin family. Decamer formed by two pentameric rings associated in a head-to-head fashion.

It is found in the nucleus. Functionally, binds to core histones and functions in the ATP-facilitated assembly of approximately regularly spaced nucleosomal arrays. May participate in parallel with other histone-binding proteins such as NAP-1. Inactive for chromatin assembly. In vitro it appears to form a high molecular mass aggregate with the core histones. This is Nucleoplasmin-like protein (Nlp) from Drosophila melanogaster (Fruit fly).